The sequence spans 431 residues: uncharacterized protein (431 aa).

Transmembrane regions (helical) follow at residues 33-53, 63-83, 111-131, 143-163, 175-195, 197-217, 241-261, 273-293, 318-338, 358-378, 381-401, and 407-427; these read VARVGTAAAVTALCGYAVIYL, FSVFGVFWGAFGLVTGAANGL, VSGMVGLGSLVVIAGSSPLWS, VALLSIGLAGFCLHATLLGML, LMVADAVIRVVVAAATFVIGW, LVGFIWATVAGSVAWLIMLMT, AHSIIAAGASAILVMGFPVLL, GVVILAVTLTRAPLLVPLTAM, LIGGVGAVGMLAAGVVGPWIM, AAAVAIAMLTLTGAAAVAAAL, AYSLGWVGATVGSGLLLLLPL, and TVVALLCGPLVGIGVHLVALA.

The protein to M.tuberculosis Rv1510 and M.bovis Mb3654.

The protein resides in the cell membrane. This is an uncharacterized protein from Mycobacterium tuberculosis (strain ATCC 25618 / H37Rv).